We begin with the raw amino-acid sequence, 930 residues long: Probable outer membrane protein pmp8 (930 aa).

Residues 1-26 (MKIPLHKLLISSTLVTPILLSIATYG) form the signal peptide. Positions 636–930 (SIYQQRGLWA…NVDCGLRYSF (295 aa)) constitute an Autotransporter domain.

It belongs to the PMP outer membrane protein family.

It is found in the secreted. Its subcellular location is the cell wall. It localises to the cell outer membrane. The sequence is that of Probable outer membrane protein pmp8 (pmp8) from Chlamydia pneumoniae (Chlamydophila pneumoniae).